We begin with the raw amino-acid sequence, 215 residues long: TLD domain-containing protein 2 (215 aa).

The segment at Met1 to Val46 is disordered. Over residues Leu19–Ala34 the composition is skewed to acidic residues. The 162-residue stretch at Gln54–Ser215 folds into the TLDc domain.

It belongs to the OXR1 family.

The sequence is that of TLD domain-containing protein 2 (TLDC2) from Homo sapiens (Human).